Consider the following 497-residue polypeptide: Lysine--tRNA ligase (497 aa).

Mg(2+) contacts are provided by Glu409 and Glu416.

Belongs to the class-II aminoacyl-tRNA synthetase family. Homodimer. Mg(2+) is required as a cofactor.

It is found in the cytoplasm. The enzyme catalyses tRNA(Lys) + L-lysine + ATP = L-lysyl-tRNA(Lys) + AMP + diphosphate. This chain is Lysine--tRNA ligase, found in Streptococcus pyogenes serotype M49 (strain NZ131).